Reading from the N-terminus, the 143-residue chain is Large ribosomal subunit protein uL13 (143 aa).

Belongs to the universal ribosomal protein uL13 family. Part of the 50S ribosomal subunit.

Its function is as follows. This protein is one of the early assembly proteins of the 50S ribosomal subunit, although it is not seen to bind rRNA by itself. It is important during the early stages of 50S assembly. This chain is Large ribosomal subunit protein uL13, found in Desulfitobacterium hafniense (strain Y51).